Here is a 391-residue protein sequence, read N- to C-terminus: Phosphoglycerate kinase (391 aa).

Substrate contacts are provided by residues Asp21–Asn23, Arg36, His59–Arg62, Arg113, and Arg146. ATP is bound by residues Lys197, Glu319, and Gly345–Thr348.

Belongs to the phosphoglycerate kinase family. In terms of assembly, monomer.

The protein localises to the cytoplasm. It carries out the reaction (2R)-3-phosphoglycerate + ATP = (2R)-3-phospho-glyceroyl phosphate + ADP. It functions in the pathway carbohydrate degradation; glycolysis; pyruvate from D-glyceraldehyde 3-phosphate: step 2/5. This chain is Phosphoglycerate kinase, found in Shewanella baltica (strain OS155 / ATCC BAA-1091).